The primary structure comprises 303 residues: Acetyl-coenzyme A carboxylase carboxyl transferase subunit beta (303 aa).

Residues 29 to 298 enclose the CoA carboxyltransferase N-terminal domain; that stretch reads LWVKCPETGQ…ATPAPASAAA (270 aa).

The protein belongs to the AccD/PCCB family. Acetyl-CoA carboxylase is a heterohexamer composed of biotin carboxyl carrier protein (AccB), biotin carboxylase (AccC) and two subunits each of ACCase subunit alpha (AccA) and ACCase subunit beta (AccD).

Its subcellular location is the cytoplasm. The catalysed reaction is N(6)-carboxybiotinyl-L-lysyl-[protein] + acetyl-CoA = N(6)-biotinyl-L-lysyl-[protein] + malonyl-CoA. It functions in the pathway lipid metabolism; malonyl-CoA biosynthesis; malonyl-CoA from acetyl-CoA: step 1/1. Functionally, component of the acetyl coenzyme A carboxylase (ACC) complex. Biotin carboxylase (BC) catalyzes the carboxylation of biotin on its carrier protein (BCCP) and then the CO(2) group is transferred by the transcarboxylase to acetyl-CoA to form malonyl-CoA. The polypeptide is Acetyl-coenzyme A carboxylase carboxyl transferase subunit beta (Methylobacterium sp. (strain 4-46)).